Reading from the N-terminus, the 96-residue chain is Co-chaperonin GroES (96 aa).

This sequence belongs to the GroES chaperonin family. In terms of assembly, heptamer of 7 subunits arranged in a ring. Interacts with the chaperonin GroEL.

Its subcellular location is the cytoplasm. In terms of biological role, together with the chaperonin GroEL, plays an essential role in assisting protein folding. The GroEL-GroES system forms a nano-cage that allows encapsulation of the non-native substrate proteins and provides a physical environment optimized to promote and accelerate protein folding. GroES binds to the apical surface of the GroEL ring, thereby capping the opening of the GroEL channel. The chain is Co-chaperonin GroES from Hydrogenovibrio crunogenus (strain DSM 25203 / XCL-2) (Thiomicrospira crunogena).